A 95-amino-acid chain; its full sequence is Co-chaperonin GroES (95 aa).

This sequence belongs to the GroES chaperonin family. In terms of assembly, heptamer of 7 subunits arranged in a ring. Interacts with the chaperonin GroEL.

The protein resides in the cytoplasm. In terms of biological role, together with the chaperonin GroEL, plays an essential role in assisting protein folding. The GroEL-GroES system forms a nano-cage that allows encapsulation of the non-native substrate proteins and provides a physical environment optimized to promote and accelerate protein folding. GroES binds to the apical surface of the GroEL ring, thereby capping the opening of the GroEL channel. The protein is Co-chaperonin GroES of Beijerinckia indica subsp. indica (strain ATCC 9039 / DSM 1715 / NCIMB 8712).